A 206-amino-acid polypeptide reads, in one-letter code: RNA pyrophosphohydrolase (206 aa).

One can recognise a Nudix hydrolase domain in the interval 6-149; sequence GYRPNVGIVL…KRGVYARALR (144 aa). Positions 38–59 match the Nudix box motif; sequence GGMNTDETPVEAMYRELQEETG. The disordered stretch occupies residues 175-206; that stretch reads MPGHTAGHDRPRKRPRSRGYWPKKAQGDVPPT.

This sequence belongs to the Nudix hydrolase family. RppH subfamily. A divalent metal cation serves as cofactor.

In terms of biological role, accelerates the degradation of transcripts by removing pyrophosphate from the 5'-end of triphosphorylated RNA, leading to a more labile monophosphorylated state that can stimulate subsequent ribonuclease cleavage. In Stenotrophomonas maltophilia (strain R551-3), this protein is RNA pyrophosphohydrolase.